The sequence spans 464 residues: Potassium/proton antiporter CemA (464 aa).

Helical transmembrane passes span 36–56 (FSLS…TEIL), 241–261 (ASVS…QIAI), 341–361 (LLLR…LLIF), 389–409 (ILLL…EILV), and 425–445 (TPCF…YWIF).

The protein belongs to the CemA family.

Its subcellular location is the plastid. The protein resides in the chloroplast inner membrane. It carries out the reaction K(+)(in) + H(+)(out) = K(+)(out) + H(+)(in). Functionally, contributes to K(+)/H(+) antiport activity by supporting proton efflux to control proton extrusion and homeostasis in chloroplasts in a light-dependent manner to modulate photosynthesis. Prevents excessive induction of non-photochemical quenching (NPQ) under continuous-light conditions. Indirectly promotes efficient inorganic carbon uptake into chloroplasts. The sequence is that of Potassium/proton antiporter CemA from Adiantum capillus-veneris (Maidenhair fern).